Reading from the N-terminus, the 940-residue chain is Isoleucine--tRNA ligase (940 aa).

The short motif at 58-68 is the 'HIGH' region element; sequence PYANGSIHIGH. Glu564 is an L-isoleucyl-5'-AMP binding site. Residues 605-609 carry the 'KMSKS' region motif; it reads KMSKS. Lys608 serves as a coordination point for ATP. Residues Cys903, Cys906, Cys923, and Cys926 each coordinate Zn(2+).

The protein belongs to the class-I aminoacyl-tRNA synthetase family. IleS type 1 subfamily. As to quaternary structure, monomer. Zn(2+) serves as cofactor.

It is found in the cytoplasm. The catalysed reaction is tRNA(Ile) + L-isoleucine + ATP = L-isoleucyl-tRNA(Ile) + AMP + diphosphate. Catalyzes the attachment of isoleucine to tRNA(Ile). As IleRS can inadvertently accommodate and process structurally similar amino acids such as valine, to avoid such errors it has two additional distinct tRNA(Ile)-dependent editing activities. One activity is designated as 'pretransfer' editing and involves the hydrolysis of activated Val-AMP. The other activity is designated 'posttransfer' editing and involves deacylation of mischarged Val-tRNA(Ile). In Shewanella sp. (strain MR-4), this protein is Isoleucine--tRNA ligase.